The following is a 1551-amino-acid chain: UDP-glucose:glycoprotein glucosyltransferase 1 (1551 aa).

A signal peptide spans 1–42 (MCSRGDANAAGAAAARRVTGLCYNMGLLIALALLCLFSLAEA). N-linked (GlcNAc...) asparagine glycans are attached at residues Asn-269, Asn-536, Asn-1015, and Asn-1228. A glucosyltransferase region spans residues 1244-1551 (KTEEVKQDKD…QEGSQKHEEL (308 aa)). Ser-1277 is modified (phosphoserine). The tract at residues 1531–1551 (KELGTLHEEETQEGSQKHEEL) is disordered. The short motif at 1548-1551 (HEEL) is the Prevents secretion from ER element.

This sequence belongs to the glycosyltransferase 8 family. As to quaternary structure, monomer as well as in a tight complex with SELENOF. Interacts with METTL23. Part of a large chaperone multiprotein complex comprising DNAJB11, HSP90B1, HSPA5, HYOU, PDIA2, PDIA4, PDIA6, PPIB, SDF2L1, UGGT1 and very small amounts of ERP29, but not, or at very low levels, CALR nor CANX. It depends on Ca(2+) as a cofactor.

Its subcellular location is the endoplasmic reticulum lumen. It localises to the endoplasmic reticulum-Golgi intermediate compartment. It carries out the reaction N(4)-(alpha-D-Man-(1-&gt;2)-alpha-D-Man-(1-&gt;2)-alpha-D-Man-(1-&gt;3)-[alpha-D-Man-(1-&gt;2)-alpha-D-Man-(1-&gt;3)-[alpha-D-Man-(1-&gt;2)-alpha-D-Man-(1-&gt;6)]-alpha-D-Man-(1-&gt;6)]-beta-D-Man-(1-&gt;4)-beta-D-GlcNAc-(1-&gt;4)-beta-D-GlcNAc)-L-asparaginyl-[protein] (N-glucan mannose isomer 9A1,2,3B1,2,3) + UDP-alpha-D-glucose = N(4)-(alpha-D-Glc-(1-&gt;3)-alpha-D-Man-(1-&gt;2)-alpha-D-Man-(1-&gt;2)-alpha-D-Man-(1-&gt;3)-[alpha-D-Man-(1-&gt;2)-alpha-D-Man-(1-&gt;3)-[alpha-D-Man-(1-&gt;2)-alpha-D-Man-(1-&gt;6)]-alpha-D-Man-(1-&gt;6)]-beta-D-Man-(1-&gt;4)-beta-D-GlcNAc-(1-&gt;4)-beta-D-GlcNAc)-L-asparaginyl-[protein] + UDP + H(+). Its pathway is protein modification; protein glycosylation. In terms of biological role, recognizes glycoproteins with minor folding defects. Reglucosylates single N-glycans near the misfolded part of the protein, thus providing quality control for protein folding in the endoplasmic reticulum. Reglucosylated proteins are recognized by calreticulin for recycling to the endoplasmic reticulum and refolding or degradation. This Rattus norvegicus (Rat) protein is UDP-glucose:glycoprotein glucosyltransferase 1 (Uggt1).